The sequence spans 85 residues: Type 3 secretion system needle filament protein (85 aa).

Residues 13–41 (LDTVANALKEQANAANKDVNDAIKALQGT) are a coiled coil.

As to quaternary structure, the core secretion machinery of the T3SS is composed of approximately 20 different proteins, including cytoplasmic components, a base, an export apparatus and a needle. This subunit polymerizes and forms the helical needle filament. Forms a stable heterotrimeric complex with PscE and PscG in the cytoplasm, blocking it in a monomeric state and preventing its polymerization.

The protein resides in the secreted. Its subcellular location is the cell surface. Functionally, component of the type III secretion system (T3SS), also called injectisome, which is used to inject bacterial effector proteins into eukaryotic host cells, facilitating the establishment and dissemination of infection. PscF/SctF forms the external needle filament that protrudes from the bacterial surface. The polypeptide is Type 3 secretion system needle filament protein (Pseudomonas aeruginosa (strain ATCC 15692 / DSM 22644 / CIP 104116 / JCM 14847 / LMG 12228 / 1C / PRS 101 / PAO1)).